A 3033-amino-acid polypeptide reads, in one-letter code: Genome polyprotein (3033 aa).

Residue S2 is modified to N-acetylserine; by host. Residues 2 to 23 (STNPKPQRKTKRNTNRRPQDVK) are interaction with STAT1. Positions 2–58 (STNPKPQRKTKRNTNRRPQDVKFPGGGQIVGGVYLLPRRGPRLGVRATRKTSERSQP) are interaction with EIF2AK2/PKR. Residues 2–59 (STNPKPQRKTKRNTNRRPQDVKFPGGGQIVGGVYLLPRRGPRLGVRATRKTSERSQPR) form an interaction with DDX3X region. The disordered stretch occupies residues 2-75 (STNPKPQRKT…PKDRRSTGKS (74 aa)). Short sequence motifs (nuclear localization signal) lie at residues 5–13 (PKPQRKTKR) and 38–43 (PRRGPR). Residues 7–16 (PQRKTKRNTN) show a composition bias toward basic residues. Positions 32–47 (GGVYLLPRRGPRLGVR) are enriched in low complexity. S53 is modified (phosphoserine; by host). 2 short sequence motifs (nuclear localization signal) span residues 58–64 (PRGRRQP) and 66–71 (PKDRRS). Phosphoserine; by host occurs at positions 99 and 116. An important for endoplasmic reticulum and mitochondrial localization region spans residues 112-152 (PRHRSRNLGRVIDTITCGFADLMGYIPVVGAPVGGVARALA). The interaction with APOA2 stretch occupies residues 122-173 (VIDTITCGFADLMGYIPVVGAPVGGVARALAHGVRVLEDGINYATRNLPGCS). The interval 164–167 (YATR) is important for lipid droplets localization. Residues 178 to 191 (LLALLSCVTVPVSS) constitute a propeptide, ER anchor for the core protein, removed in mature form by host signal peptidase. The Lumenal portion of the chain corresponds to 190-358 (SSVEIRNIST…FGGHWGVVFG (169 aa)). N-linked (GlcNAc...) asparagine; by host glycans are attached at residues N196 and N209. Positions 265–296 (IVMAATVCSALYVGDVCGAVMIVSQALIVSPE) are important for fusion. N-linked (GlcNAc...) asparagine; by host glycosylation is present at N305. A helical membrane pass occupies residues 359 to 379 (LAYFSMQGAWAKVIAILLLVA). The Lumenal segment spans residues 380-729 (GVDATTYSTG…WEWVVLLFLL (350 aa)). An HVR1 region spans residues 385–412 (TYSTGATVGRTVGSFAGLFKLGAQQNVQ). 3 N-linked (GlcNAc...) (high mannose) asparagine; by host glycosylation sites follow: N417, N423, and N430. Cystine bridges form between C429–C554, C452–C459, C488–C496, and C505–C510. An N-linked (GlcNAc...) asparagine; by host glycan is attached at N448. Positions 475–480 (ETNVTN) are HVR2. N-linked (GlcNAc...) asparagine; by host glycosylation is present at N477. Residues 482 to 495 (EDMRPYCWHYPPKP) form a CD81-binding 1 region. The N-linked (GlcNAc...) asparagine; by host glycan is linked to N534. Residues 546–553 (PPRGAWFG) are CD81-binding 2. An N-linked (GlcNAc...) asparagine; by host glycan is attached at N558. Cystine bridges form between C566–C571, C585–C589, C601–C624, and C611–C648. N-linked (GlcNAc...) (high mannose) asparagine; by host glycans are attached at residues N627 and N649. A disulfide bridge connects residues C656 and C681. A PKR/eIF2-alpha phosphorylation homology domain (PePHD) region spans residues 664–675 (GQQSPLLHSTTE). The helical transmembrane segment at 730-750 (LADARICACLWMLIILGQAEA) threads the bilayer. Residues 751-761 (ALEKLIILHSA) are Lumenal-facing. Residues 762–782 (SAASANGPLWFFIFFTAAWYL) form a helical membrane-spanning segment. Topologically, residues 783 to 786 (KGRV) are cytoplasmic. Residues 787–807 (VPAATYSVLGLWSFLLLVLAL) traverse the membrane as a helical segment. At 808–817 (PQQAYALDAA) the chain is on the lumenal side. Residues 818-838 (EQGELGLVILMIISIFTLTPA) traverse the membrane as a helical segment. Residues 839–885 (YKILLSRSVWWLSYMLVLAEAQVQQWVPPLEARGGRDGIIWVAVILH) are Cytoplasmic-facing. Residues 886-906 (PHLVFEVTKWLLAILGSAYLL) form a helical membrane-spanning segment. Residues 907 to 932 (KASLLRVPYFVRAHALLRVCTLVRHL) lie on the Lumenal side of the membrane. Residues 907 to 1030 (KASLLRVPYF…GYTSKGWKLL (124 aa)) form the Peptidase C18 domain. Positions 908 to 1210 (ASLLRVPYFV…PVESLDIARR (303 aa)) are protease NS2-3. C926 carries the S-palmitoyl cysteine; by host lipid modification. Residues 933-953 (AGARYIQMLLITMGRWTGTYI) traverse the membrane as a helical segment. The interaction with host SCPS1 stretch occupies residues 933 to 953 (AGARYIQMLLITMGRWTGTYI). Residues 954–1661 (YDHLSPLSTW…CMQADLEVMT (708 aa)) lie on the Cytoplasmic side of the membrane. Active-site for protease NS2 activity; shared with dimeric partner residues include H956, E976, and C997. The 182-residue stretch at 1031–1212 (APITAYTQQT…ESLDIARRTP (182 aa)) folds into the Peptidase S29 domain. Catalysis depends on charge relay system; for serine protease NS3 activity residues H1087 and D1111. Zn(2+) contacts are provided by C1127 and C1129. S1169 functions as the Charge relay system; for serine protease NS3 activity in the catalytic mechanism. Positions 1175 and 1179 each coordinate Zn(2+). One can recognise a Helicase ATP-binding domain in the interval 1221–1373 (PAVPQTYQVG…ANIEEVALGH (153 aa)). 1234–1241 (APTGSGKS) contributes to the ATP binding site. Mg(2+) contacts are provided by S1241 and E1321. Positions 1320-1323 (DECH) match the DECH box motif. The segment at 1490–1502 (QRRGRTGRGRLGT) is RNA-binding. A helical membrane pass occupies residues 1662–1682 (STWVLAGGVLAAVAAYCLATG). Residues 1683–1694 (CISIIGRIHLND) form an NS3-binding region. Topologically, residues 1683 to 1809 (CISIIGRIHL…ALTSPLPTST (127 aa)) are cytoplasmic. Residues 1810–1830 (TILLNIMGGWLASQIAPPAGA) form a helical membrane-spanning segment. Over 1831–1832 (TG) the chain is Lumenal. The chain crosses the membrane as a helical span at residues 1833-1853 (FVVSGLVGAAVGSIGLGKILV). A topological domain (cytoplasmic) is located at residue D1854. A helical transmembrane segment spans residues 1855–1875 (VLAGYGAGISGALVAFKIMSG). Over 1876–1885 (EKPSVEDVVN) the chain is Lumenal. A helical transmembrane segment spans residues 1886–1906 (LLPAILSPGALVVGVICAAIL). At 1907–1976 (RRHVGQGEGA…WITEDCPVPC (70 aa)) the chain is on the cytoplasmic side. A lipid anchor (S-palmitoyl cysteine; by host) is attached at C1976. Residues 1977-2007 (SGSWLRDIWEWVCSILTDFKNWLSAKLLPKM) lie within the membrane without spanning it. Over 2008–3012 (PGLPFISCQK…FHSVSHARPR (1005 aa)) the chain is Cytoplasmic. Zn(2+)-binding residues include C2015, C2033, C2035, and C2056. The interval 2124-2212 (EFFSWVDGVQ…ASSSASQLSA (89 aa)) is FKBP8-binding. A transcriptional activation region spans residues 2124–2332 (EFFSWVDGVQ…PVPPPRRRRA (209 aa)). The interaction with non-structural protein 4A stretch occupies residues 2139–2143 (PTPGP). Residues 2192 to 2213 (RRLARGSPPSQASSSASQLSAP) are disordered. The interaction with host SKP2 stretch occupies residues 2193-2460 (RLARGSPPSQ…ALITPCGPEE (268 aa)). 6 positions are modified to phosphoserine; by host: S2198, S2201, S2205, S2208, S2211, and S2214. The span at 2198 to 2213 (SPPSQASSSASQLSAP) shows a compositional bias: low complexity. Positions 2214–2249 (SLKATCTTHKTAYDCDMVDANLFMGGDVTRIESDSK) are ISDR. An interaction with EIF2AK2/PKR region spans residues 2214–2275 (SLKATCTTHK…REPSVPSEYL (62 aa)). Positions 2249 to 2306 (KVIVLDSLDSMTEVEDDREPSVPSEYLTRRRKFPPALPPWARPDYNPPVIETWKRPDY) are NS4B-binding. The tract at residues 2299 to 2377 (ETWKRPDYEP…DTGGDSVQQP (79 aa)) is V3. The SH3-binding motif lies at 2322–2325 (APVP). The short motif at 2327–2335 (PRRRRARVL) is the Nuclear localization signal element. K2350 participates in a covalent cross-link: Glycyl lysine isopeptide (Lys-Gly) (interchain with G-Cter in ubiquitin). Residues 2354-2431 (PLQDTNDSGH…IDSDSKSWST (78 aa)) are disordered. Positions 2355 to 2391 (LQDTNDSGHSTGADTGGDSVQQPSGETAASDAGSLSS) are enriched in polar residues. S2471 and S2484 each carry phosphoserine; by host. Positions 2656 to 2774 (PMGFSYDTRC…ISESQGNEED (119 aa)) constitute a RdRp catalytic domain. Positions 2662, 2760, and 2761 each coordinate Mg(2+). Residues 3013-3033 (LLLLCLLLLSVGVGIFLLPAR) form a helical membrane-spanning segment.

The protein belongs to the hepacivirus polyprotein family. In terms of assembly, homooligomer. Interacts with E1 (via C-terminus). Interacts with the non-structural protein 5A. Interacts (via N-terminus) with host STAT1 (via SH2 domain); this interaction results in decreased STAT1 phosphorylation and ubiquitin-mediated proteasome-dependent STAT1 degradation, leading to decreased IFN-stimulated gene transcription. Interacts with host STAT3; this interaction constitutively activates STAT3. Interacts with host LTBR receptor. Interacts with host TNFRSF1A receptor and possibly induces apoptosis. Interacts with host HNRPK. Interacts with host YWHAE. Interacts with host UBE3A/E6AP. Interacts with host DDX3X. Interacts with host APOA2. Interacts with host RXRA protein. Interacts with host SP110 isoform 3/Sp110b; this interaction sequesters the transcriptional corepressor SP110 away from the nucleus. Interacts with host CREB3 nuclear transcription protein; this interaction triggers cell transformation. Interacts with host ACY3. Interacts with host C1QR1. Interacts with host RBM24; this interaction, which enhances the interaction of the mature core protein with 5'-UTR, may inhibit viral translation and favor replication. Interacts with host EIF2AK2/PKR; this interaction induces the autophosphorylation of EIF2AK2. Part of the viral assembly initiation complex composed of NS2, E1, E2, NS3, NS4A, NS5A and the mature core protein. As to quaternary structure, forms a heterodimer with envelope glycoprotein E2. Interacts with mature core protein. Interacts with protease NS2. The heterodimer E1/E2 interacts with host CLDN1; this interaction plays a role in viral entry into host cell. Interacts with host SPSB2 (via C-terminus). Part of the viral assembly initiation complex composed of NS2, E1, E2, NS3, NS4A, NS5A and the mature core protein. Interacts with host NEURL3; this interaction prevents E1 binding to glycoprotein E2. Forms a heterodimer with envelope glycoprotein E1. Interacts with host CD81 and SCARB1 receptors; these interactions play a role in viral entry into host cell. Interacts with host EIF2AK2/PKR; this interaction inhibits EIF2AK2 and probably allows the virus to evade the innate immune response. Interacts with host CD209/DC-SIGN and CLEC4M/DC-SIGNR. Interact with host SPCS1; this interaction is essential for viral particle assembly. Interacts with protease NS2. The heterodimer E1/E2 interacts with host CLDN1; this interaction plays a role in viral entry into host cell. Part of the viral assembly initiation complex composed of NS2, E1, E2, NS3, NS4A, NS5A and the mature core protein. Interacts with host SLC3A2/4F2hc; the interaction may facilitate viral entry into host cell. Interacts with human PLSCR1. In terms of assembly, homohexamer. Homoheptamer. Interacts with protease NS2. As to quaternary structure, homodimer. Interacts with host SPCS1; this interaction is essential for viral particle assembly. Interacts with envelope glycoprotein E1. Interacts with envelope glycoprotein E2. Interacts with viroporin p7. Interacts with serine protease/helicase NS3. Part of the replication complex composed of NS2, NS3, NS4A, NS4B, NS5A and the RNA-directed RNA polymerase embedded in an ER-derived membranous web. Part of the viral assembly initiation complex composed of NS2, E1, E2, NS3, NS4A, NS5A and the mature core protein. Interacts with protease NS2. Interacts with non-structural protein 4A; this interaction stabilizes the folding of NS3 serine protease. NS3-NS4A interaction is essential for NS3 activation and allows membrane anchorage of the latter. NS3/NS4A complex also prevents phosphorylation of host IRF3, thus preventing the establishment of dsRNA induced antiviral state. Interacts with host MAVS; this interaction leads to the cleavage and inhibition of host MAVS. Interacts with host TICAM1; this interaction leads to the cleavage and inhibition of host TICAM1. Interacts with host TANK-binding kinase/TBK1; this interaction results in the inhibition of the association between TBK1 and IRF3, which leads to the inhibition of IRF3 activation. Interacts with host RBM24. Part of the replication complex composed of NS2, NS3, NS4A, NS4B, NS5A and the RNA-directed RNA polymerase embedded in an ER-derived membranous web. Part of the viral assembly initiation complex composed of NS2, E1, E2, NS3, NS4A, NS5A and the mature core protein. In terms of assembly, interacts with NS3 serine protease; this interaction stabilizes the folding of NS3 serine protease. NS3-NS4A interaction is essential for NS3 activation and allows membrane anchorage of the latter. Interacts with non-structural protein 5A (via N-terminus). Part of the replication complex composed of NS2, NS3, NS4A, NS4B, NS5A and the RNA-directed RNA polymerase embedded in an ER-derived membranous web. Part of the viral assembly initiation complex composed of NS2, E1, E2, NS3, NS4A, NS5A and the mature core protein. As to quaternary structure, homomultimer. Interacts with non-structural protein NS5A. Interacts with host PLA2G4C; this interaction likely initiates the recruitment of replication complexes to lipid droplets. Interacts with host STING; this interaction disrupts the interaction between STING and TBK1 thereby suppressing the interferon signaling. Part of the replication complex composed of NS2, NS3, NS4A, NS4B, NS5A and the RNA-directed RNA polymerase embedded in an ER-derived membranous web. Monomer. Homodimer; dimerization is required for RNA-binding. Interacts with the mature core protein. Interacts (via N-terminus) with non-structural protein 4A. Interacts with non-structural protein 4B. Interacts (via region D2) with RNA-directed RNA polymerase. Part of the viral assembly initiation complex composed of NS2, E1, E2, NS3, NS4A, NS5A and the mature core protein. Part of the replication complex composed of NS2, NS3, NS4A, NS4B, NS5A and the RNA-directed RNA polymerase embedded in an ER-derived membranous web. Interacts with host GRB2. Interacts with host BIN1. Interacts with host PIK3R1. Interacts with host SRCAP. Interacts with host FKBP8. Interacts (via C-terminus) with host VAPB (via MSP domain). Interacts with host EIF2AK2/PKR; this interaction leads to disruption of EIF2AK2 dimerization by NS5A and probably allows the virus to evade the innate immune response. Interacts (via N-terminus) with host PACSIN2 (via N-terminus); this interaction attenuates protein kinase C alpha-mediated phosphorylation of PACSIN2 by disrupting the interaction between PACSIN2 and PRKCA. Interacts (via N-terminus) with host SRC kinase (via SH2 domain). Interacts with most Src-family kinases. Interacts with host IFI27 and SKP2; promotes the ubiquitin-mediated proteasomal degradation of NS5A. Interacts with host GPS2. Interacts with host TNFRSF21; this interaction allows the modulation by the virus of JNK, p38 MAPK, STAT3, and Akt signaling pathways in a DR6-dependent manner. Interacts (via N-terminus) with host CIDEB (via N-terminus); this interaction seems to regulate the association of HCV particles with APOE. Interacts with host CHKA/Choline Kinase-alpha; CHKA bridges host PI4KA and NS5A and potentiates NS5A-stimulated PI4KA activity, which then facilitates the targeting of the ternary complex to the ER for viral replication. Interacts with host SPSB2 (via C-terminus); this interaction targets NS5A for ubiquitination and degradation. Interacts with host RAB18; this interaction may promote the association of NS5A and other replicase components with lipid droplets. Interacts (via region D2) with host PPIA/CYPA; the interaction stimulates RNA-binding ability of NS5A and is dependent on the peptidyl-prolyl cis-trans isomerase activity of PPIA/CYPA. Interacts with host TRIM14; this interaction induces the degradation of NS5A. In terms of assembly, homooligomer. Interacts with non-structural protein 5A. Interacts with host VAPB. Interacts with host PRK2/PKN2. Interacts with host HNRNPA1 and SEPT6; these interactions facilitate viral replication. Part of the replication complex composed of NS2, NS3, NS4A, NS4B, NS5A and the RNA-directed RNA polymerase. The cofactor is Zn(2+). Mg(2+) is required as a cofactor. In terms of processing, specific enzymatic cleavages in vivo yield mature proteins. The structural proteins, core, E1, E2 and p7 are produced by proteolytic processing by host signal peptidases. The core protein precursor is synthesized as a 23 kDa, which is retained in the ER membrane through the hydrophobic signal peptide. Cleavage by the signal peptidase releases the 21 kDa mature core protein. The cleavage of the core protein precursor occurs between aminoacids 176 and 188 but the exact cleavage site is not known. Some degraded forms of the core protein appear as well during the course of infection. The other proteins (p7, NS2, NS3, NS4A, NS4B, NS5A and NS5B) are cleaved by the viral proteases. Autoprocessing between NS2 and NS3 is mediated by the NS2 cysteine protease catalytic domain and regulated by the NS3 N-terminal domain. Post-translationally, phosphorylated by host PKC and PKA. Ubiquitinated; mediated by UBE3A and leading to core protein subsequent proteasomal degradation. In terms of processing, highly N-glycosylated. Post-translationally, palmitoylation is required for NS2/3 autoprocessing and E2 recruitment to membranes. Palmitoylated. This modification may play a role in its polymerization or in protein-protein interactions. In terms of processing, phosphorylated on serines in a basal form termed p56. p58 is a hyperphosphorylated form of p56. p56 and p58 coexist in the cell in roughly equivalent amounts. Hyperphosphorylation is dependent on the presence of NS4A. Host CSNK1A1/CKI-alpha or RPS6KB1 kinases may be responsible for NS5A phosphorylation. Post-translationally, tyrosine phosphorylation is essential for the interaction with host SRC. Ubiquitinated. Ubiquitination, most probably at Lys-2350, mediated by host IFI27 and SKP2 leads to proteasomal degradation, restricting viral infection. Ubiquitination by host TRIM22 leads to interruption of viral replication. In terms of processing, the N-terminus is phosphorylated by host PRK2/PKN2.

It is found in the host endoplasmic reticulum membrane. It localises to the host mitochondrion membrane. The protein localises to the virion. Its subcellular location is the host cytoplasm. The protein resides in the host nucleus. It is found in the host lipid droplet. It localises to the virion membrane. The protein localises to the host mitochondrion. Its subcellular location is the host cell membrane. The protein resides in the host perinuclear region. It catalyses the reaction Hydrolysis of four peptide bonds in the viral precursor polyprotein, commonly with Asp or Glu in the P6 position, Cys or Thr in P1 and Ser or Ala in P1'.. It carries out the reaction a ribonucleoside 5'-triphosphate + H2O = a ribonucleoside 5'-diphosphate + phosphate + H(+). The enzyme catalyses ATP + H2O = ADP + phosphate + H(+). The catalysed reaction is RNA(n) + a ribonucleoside 5'-triphosphate = RNA(n+1) + diphosphate. With respect to regulation, inhibited by the antiviral drug hexamethylene amiloride. Inhibition by amantadine appears to be genotype-dependent. Also inhibited by long-alkyl-chain iminosugar derivatives. Activity is up-regulated by PRK2/PKN2-mediated phosphorylation. Functionally, packages viral RNA to form a viral nucleocapsid, and promotes virion budding. Participates in the viral particle production as a result of its interaction with the non-structural protein 5A. Binds RNA and may function as a RNA chaperone to induce the RNA structural rearrangements taking place during virus replication. Modulates viral translation initiation by interacting with viral IRES and 40S ribosomal subunit. Affects various cell signaling pathways, host immunity and lipid metabolism. Prevents the establishment of cellular antiviral state by blocking the interferon-alpha/beta (IFN-alpha/beta) and IFN-gamma signaling pathways and by blocking the formation of phosphorylated STAT1 and promoting ubiquitin-mediated proteasome-dependent degradation of STAT1. Activates STAT3 leading to cellular transformation. Regulates the activity of cellular genes, including c-myc and c-fos. May repress the promoter of p53, and sequester CREB3 and SP110 isoform 3/Sp110b in the cytoplasm. Represses cell cycle negative regulating factor CDKN1A, thereby interrupting an important check point of normal cell cycle regulation. Targets transcription factors involved in the regulation of inflammatory responses and in the immune response: suppresses TNF-induced NF-kappa-B activation, and activates AP-1. Binds to dendritic cells (DCs) via C1QR1, resulting in down-regulation of T-lymphocytes proliferation. Alters lipid metabolism by interacting with hepatocellular proteins involved in lipid accumulation and storage. Induces up-regulation of FAS promoter activity, and thereby contributes to the increased triglyceride accumulation in hepatocytes (steatosis). Its function is as follows. Forms a heterodimer with envelope glycoprotein E2, which mediates virus attachment to the host cell, virion internalization through clathrin-dependent endocytosis and fusion with host membrane. Fusion with the host cell is most likely mediated by both E1 and E2, through conformational rearrangements of the heterodimer required for fusion rather than a classical class II fusion mechanism. E1/E2 heterodimer binds host apolipoproteins such as APOB and ApoE thereby forming a lipo-viro-particle (LVP). APOE associated to the LVP allows the initial virus attachment to cell surface receptors such as the heparan sulfate proteoglycans (HSPGs), syndecan-1 (SDC1), syndecan-1 (SDC2), the low-density lipoprotein receptor (LDLR) and scavenger receptor class B type I (SCARB1). The cholesterol transfer activity of SCARB1 allows E2 exposure and binding of E2 to SCARB1 and the tetraspanin CD81. E1/E2 heterodimer binding on CD81 activates the epithelial growth factor receptor (EGFR) signaling pathway. Diffusion of the complex E1-E2-EGFR-SCARB1-CD81 to the cell lateral membrane allows further interaction with Claudin 1 (CLDN1) and occludin (OCLN) to finally trigger HCV entry. Forms a heterodimer with envelope glycoprotein E1, which mediates virus attachment to the host cell, virion internalization through clathrin-dependent endocytosis and fusion with host membrane. Fusion with the host cell is most likely mediated by both E1 and E2, through conformational rearrangements of the heterodimer required for fusion rather than a classical class II fusion mechanism. The interaction between envelope glycoprotein E2 and host apolipoprotein E/APOE allows the proper assembly, maturation and infectivity of the viral particles. This interaction is probably promoted via the up-regulation of cellular autophagy by the virus. E1/E2 heterodimer binds host apolipoproteins such as APOB and APOE thereby forming a lipo-viro-particle (LVP). APOE associated to the LVP allows the initial virus attachment to cell surface receptors such as the heparan sulfate proteoglycans (HSPGs), syndecan-1 (SDC1), syndecan-1 (SDC2), the low-density lipoprotein receptor (LDLR) and scavenger receptor class B type I (SCARB1). The cholesterol transfer activity of SCARB1 allows E2 exposure and binding of E2 to SCARB1 and the tetraspanin CD81. E1/E2 heterodimer binding on CD81 activates the epithelial growth factor receptor (EGFR) signaling pathway. Diffusion of the complex E1-E2-EGFR-SCARB1-CD81 to the cell lateral membrane allows further interaction with Claudin 1 (CLDN1) and occludin (OCLN) to finally trigger HCV entry. Inhibits host EIF2AK2/PKR activation, preventing the establishment of an antiviral state. Viral ligand for CD209/DC-SIGN and CLEC4M/DC-SIGNR, which are respectively found on dendritic cells (DCs), and on liver sinusoidal endothelial cells and macrophage-like cells of lymph node sinuses. These interactions allow the capture of circulating HCV particles by these cells and subsequent facilitated transmission to permissive cells such as hepatocytes and lymphocyte subpopulations. The interaction between E2 and host amino acid transporter complex formed by SLC3A2 and SLC7A5/LAT1 may facilitate viral entry into host cell. In terms of biological role, ion channel protein that acts as a viroporin and plays an essential role in the assembly, envelopment and secretion of viral particles. Regulates the host cell secretory pathway, which induces the intracellular retention of viral glycoproteins and favors assembly of viral particles. Creates a pore in acidic organelles and releases Ca(2+) and H(+) in the cytoplasm of infected cells, leading to a productive viral infection. High levels of cytoplasmic Ca(2+) may trigger membrane trafficking and transport of viral ER-associated proteins to viroplasms, sites of viral genome replication. This ionic imbalance induces the assembly of the inflammasome complex, which triggers the maturation of pro-IL-1beta into IL-1beta through the action of caspase-1. Targets also host mitochondria and induces mitochondrial depolarization. In addition of its role as a viroporin, acts as a lipid raft adhesion factor. Functionally, cysteine protease required for the proteolytic auto-cleavage between the non-structural proteins NS2 and NS3. The N-terminus of NS3 is required for the function of NS2 protease (active region NS2-3). Promotes the initiation of viral particle assembly by mediating the interaction between structural and non-structural proteins. Its function is as follows. Displays three enzymatic activities: serine protease with a chymotrypsin-like fold, NTPase and RNA helicase. NS3 serine protease, in association with NS4A, is responsible for the cleavages of NS3-NS4A, NS4A-NS4B, NS4B-NS5A and NS5A-NS5B. The NS3/NS4A complex prevents phosphorylation of host IRF3, thus preventing the establishment of dsRNA induced antiviral state. The NS3/NS4A complex induces host amino acid transporter component SLC3A2, thus contributing to HCV propagation. NS3 RNA helicase binds to RNA and unwinds both dsDNA and dsRNA in the 3' to 5' direction, and likely resolves RNA complicated stable secondary structures in the template strand. Binds a single ATP and catalyzes the unzipping of a single base pair of dsRNA. Inhibits host antiviral proteins TBK1 and IRF3 thereby preventing the establishment of an antiviral state. Cleaves host MAVS/CARDIF thereby preventing the establishment of an antiviral state. Cleaves host TICAM1/TRIF, thereby disrupting TLR3 signaling and preventing the establishment of an antiviral state. Induces a specific membrane alteration that serves as a scaffold for the virus replication complex. This membrane alteration gives rise to the so-called ER-derived membranous web that contains the replication complex. NS4B self-interaction contributes to its function in membranous web formation. Promotes host TRIF protein degradation in a CASP8-dependent manner thereby inhibiting host TLR3-mediated interferon signaling. Disrupts the interaction between STING and TBK1 contributing to the inhibition of interferon signaling. In terms of biological role, phosphorylated protein that is indispensable for viral replication and assembly. Both hypo- and hyperphosphorylated states are required for the viral life cycle. The hyperphosphorylated form of NS5A is an inhibitor of viral replication. Involved in RNA-binding and especially in binding to the viral genome. Zinc is essential for RNA-binding. Participates in the viral particle production as a result of its interaction with the mature viral core protein. Its interaction with host VAPB may target the viral replication complex to vesicles. Down-regulates viral IRES translation initiation. Mediates interferon resistance, presumably by interacting with and inhibiting host EIF2AK2/PKR. Prevents BIN1-induced apoptosis. Acts as a transcriptional activator of some host genes important for viral replication when localized in the nucleus. Via the interaction with host PACSIN2, modulates lipid droplet formation in order to promote virion assembly. Modulates TNFRSF21/DR6 signaling pathway for viral propagation. Functionally, RNA-dependent RNA polymerase that performs primer-template recognition and RNA synthesis during viral replication. Initiates RNA transcription/replication at a flavin adenine dinucleotide (FAD), resulting in a 5'- FAD cap on viral RNAs. In this way, recognition of viral 5' RNA by host pattern recognition receptors can be bypassed, thereby evading activation of antiviral pathways. The polypeptide is Genome polyprotein (Hepatitis C virus genotype 2b (isolate JPUT971017) (HCV)).